A 530-amino-acid chain; its full sequence is Equilibrative nucleoside transporter 4 (530 aa).

Positions 1-21 (MGSVGSQRLEEPSVAGTPDPG) are disordered. Residues 1 to 68 (MGSVGSQRLE…DEPVPDDRYH (68 aa)) are Extracellular-facing. A helical membrane pass occupies residues 69 to 89 (AIYFAMLLAGVGFLLPYNSFI). At 90–101 (TDVDYLHHKYPG) the chain is on the cytoplasmic side. Residues 102 to 122 (TSIVFDMSLTYILVALAAVLL) traverse the membrane as a helical segment. At 123–139 (NNVLVERLTLHTRITAG) the chain is on the extracellular side. The chain crosses the membrane as a helical span at residues 140 to 160 (YLLALGPLLFISICDVWLQLF). Over 161 to 166 (SRDQAY) the chain is Cytoplasmic. A helical transmembrane segment spans residues 167-187 (AINLAAVGTVAFGCTVQQSSF). Residues 188 to 231 (YGYTGMLPKRYTQGVMTGESTAGVMISLSRILTKLLLPDERAST) are Extracellular-facing. A helical transmembrane segment spans residues 232–252 (LIFFLVSVALELLCFLLHLLV). The Cytoplasmic portion of the chain corresponds to 253-351 (RRSRFVLFYT…LLLHRYVVAR (99 aa)). A helical membrane pass occupies residues 352–372 (VIWADMLSIAVTYFITLCLFP). Over 373–381 (GLESEIRHC) the chain is Extracellular. A helical membrane pass occupies residues 382–402 (ILGEWLPILIMAVFNLSDFVG). Topologically, residues 403-416 (KILAALPVDWRGTH) are cytoplasmic. Residues 417-437 (LLACSCLRVVFIPLFILCVYP) form a helical membrane-spanning segment. At 438-450 (SGMPALRHPAWPC) the chain is on the extracellular side. Residues 451-471 (IFSLLMGISNGYFGSVPMILA) form a helical membrane-spanning segment. Topologically, residues 472–486 (AGKVSPKQRELAGNT) are cytoplasmic. The chain crosses the membrane as a helical span at residues 487-509 (MTVSYMSGLTLGSAVAYCTYSLT). Residues 510 to 530 (RDAHGSCLHASTANGSILAGL) lie on the Extracellular side of the membrane. The N-linked (GlcNAc...) asparagine glycan is linked to Asn523.

This sequence belongs to the SLC29A/ENT transporter (TC 2.A.57) family. N-glycosylated. As to expression, mainly expressed in brain and skeletal muscle. In brain, expressed in cerebellum, cerebral cortex, medulla oblongata, occipital pole, frontal and temporal lobes putamen, spinal cord, substancia nigra, hippocampus, caudate nucleus, nucleus accumbens, pons and choroid plexus. Expressed in heart, in both cardiomyocytes and vascular endothelial cells. Also expressed in adrenal gland, small intestine, pancreas, kidney, liver, bone marrow, lymph node. Located in endometrial stroma, where the expression is high in the proliferative phase, decreases during the secretory phase, and is no longer detectable in the menstrual phase.

It is found in the cell membrane. The protein localises to the apical cell membrane. It carries out the reaction serotonin(out) = serotonin(in). The enzyme catalyses dopamine(out) = dopamine(in). It catalyses the reaction (R)-noradrenaline(out) = (R)-noradrenaline(in). The catalysed reaction is (R)-adrenaline(out) = (R)-adrenaline(in). It carries out the reaction histamine(out) = histamine(in). The enzyme catalyses tyramine(in) = tyramine(out). It catalyses the reaction guanidine(out) = guanidine(in). The catalysed reaction is adenosine(in) = adenosine(out). Its activity is regulated as follows. Activated at acidic pH. In terms of biological role, electrogenic voltage-dependent transporter that mediates the transport of a variety of endogenous bioactive amines, cationic xenobiotics and drugs. Utilizes the physiologic inside-negative membrane potential as a driving force to facilitate cellular uptake of organic cations. Functions as a Na(+)- and Cl(-)-independent bidirectional transporter. Substrate transport is pH-dependent and enhanced under acidic condition, which is most likely the result of allosteric changes in the transporter structure. Implicated in monoamine neurotransmitters uptake such as serotonin, dopamine, adrenaline/epinephrine, noradrenaline/norepinephrine, histamine and tyramine, thereby supporting a role in homeostatic regulation of aminergic neurotransmission in the central nervous system. Also responsible for the uptake of bioactive amines and drugs through the blood-cerebrospinal fluid (CSF) barrier, from the CSF into choroid plexus epithelial cells, thereby playing a significant role in the clearance of cationic neurotoxins, xenobiotics and metabolic waste in the brain. Involved in bidirectional transport of the purine nucleoside adenosine and plays a role in the regulation of extracellular adenosine concentrations in cardiac tissues, in particular during ischemia. May be involved in organic cation uptake from the tubular lumen into renal tubular cells, thereby contributing to organic cation reabsorption in the kidney. Also transports guanidine. The chain is Equilibrative nucleoside transporter 4 from Homo sapiens (Human).